The primary structure comprises 493 residues: Catalase A (493 aa).

The segment at 1 to 24 (MKRKLTGLFGAPVSDRENSMTAGP) is disordered. Active-site residues include His53 and Asn126. A heme-binding site is contributed by Tyr336.

It belongs to the catalase family. Homodimer. Requires heme as cofactor.

It catalyses the reaction 2 H2O2 = O2 + 2 H2O. Functionally, decomposes hydrogen peroxide into water and oxygen; serves to protect cells from the toxic effects of hydrogen peroxide. The sequence is that of Catalase A (katA) from Staphylococcus xylosus.